The following is a 224-amino-acid chain: A-type ATP synthase subunit D (224 aa).

The span at 200-209 shows a compositional bias: basic and acidic residues; the sequence is KKVKDKKEAQ. Residues 200–224 are disordered; it reads KKVKDKKEAQEEAADEAAAAESTGA. The segment covering 215–224 has biased composition (low complexity); it reads EAAAAESTGA.

Belongs to the V-ATPase D subunit family. As to quaternary structure, has multiple subunits with at least A(3), B(3), C, D, E, F, H, I and proteolipid K(x).

It localises to the cell membrane. Component of the A-type ATP synthase that produces ATP from ADP in the presence of a proton gradient across the membrane. In Halobacterium salinarum (strain ATCC 29341 / DSM 671 / R1), this protein is A-type ATP synthase subunit D.